A 184-amino-acid chain; its full sequence is MESFSSKSLALQAEKKLLSKMAGRSVAHLFIDETSSEVLDELYRVSKEYTHSRPQAQRVIKDLIKVAVKVAVLHRNGSFGPSELALATRFRQKLRQGAMTALSFGEVDFTFEAAVLAGLLTECRDVLLELVEHHLTPKSHGRIRHVFDHFSDPGLLTALYGPDFTQHLGKICDGLRKLLDEGKL.

Ser3 bears the Phosphoserine mark.

This sequence belongs to the TNFAIP8 family. TNFAIP8L2 subfamily. As to quaternary structure, may interact with CASP8; however, such result is unclear since could not reproduce the interaction with CASP8. Interacts with RAC1. In terms of processing, phosphorylated by TAK1/MAP3K7; this phosphorylation triggers association with BTRC and subsequent ubiquitination and degradation. Post-translationally, ubiquitinated in a BTRC-depdent manner; leading to degradation mediated through the proteasome pathway.

It localises to the cytoplasm. Its subcellular location is the nucleus. The protein localises to the lysosome. In terms of biological role, acts as a negative regulator of innate and adaptive immunity by maintaining immune homeostasis. Plays a regulatory role in the Toll-like signaling pathway by determining the strength of LPS-induced signaling and gene expression. Inhibits TCR-mediated T-cell activation and negatively regulate T-cell function to prevent hyperresponsiveness. Also inhibits autolysosome formation via negatively modulating MTOR activation by interacting with RAC1 and promoting the disassociation of the RAC1-MTOR complex. Plays an essential role in NK-cell biology by acting as a checkpoint and displaying an expression pattern correlating with NK-cell maturation process and by negatively regulating NK-cell maturation and antitumor immunity. Mechanistically, suppresses IL-15-triggered mTOR activity in NK-cells. In Papio anubis (Olive baboon), this protein is Tumor necrosis factor alpha-induced protein 8-like protein 2 (TNFAIP8L2).